Here is a 264-residue protein sequence, read N- to C-terminus: MAEYLASIFGTEKDKVNCSFYFKIGACRHGDRCSRIHNKPTFSQTVLLQNLYVNPQNSAKSADGSHLVANVSDEEMQEHYDNFFEDVFVECEDKYGEIEEMNVCDNLGDHLVGNVYIKFRNEADAEKAANDLNNRWFGGRPVYSELSPVTDFREACCRQYEMGECTRSGFCNFMHLKPISRELRRYLYSRRRRARSRSRSPGRRRGSRSRSRSPGRRGGGRGDGVGGGNYLNNERDNMRGNDRGNDRDRRKGGGGGGGGGGGRY.

The segment at 12–40 adopts a C3H1-type 1 zinc-finger fold; the sequence is EKDKVNCSFYFKIGACRHGDRCSRIHNKP. Ser-19 carries the phosphoserine modification. Residues 44-149 enclose the RRM domain; the sequence is QTVLLQNLYV…RPVYSELSPV (106 aa). A C3H1-type 2 zinc finger spans residues 151–178; sequence DFREACCRQYEMGECTRSGFCNFMHLKP. Residues 190 to 219 are compositionally biased toward basic residues; it reads RRRRARSRSRSPGRRRGSRSRSRSPGRRGG. Positions 190–264 are disordered; that stretch reads RRRRARSRSR…GGGGGGGGRY (75 aa). Positions 233-251 are enriched in basic and acidic residues; the sequence is NERDNMRGNDRGNDRDRRK. The span at 253–264 shows a compositional bias: gly residues; sequence GGGGGGGGGGRY.

The protein belongs to the splicing factor SR family. In terms of assembly, associates with a 65 kDa protein.

It is found in the nucleus. Its function is as follows. Necessary for the splicing of pre-mRNA. Binds to the polypyrimidine tract of introns early during spliceosome assembly. The sequence is that of Splicing factor U2af 38 kDa subunit (U2af38) from Drosophila melanogaster (Fruit fly).